We begin with the raw amino-acid sequence, 340 residues long: MILSIESSCDDSSLALTRIEDAKLIAHFKISQEKHHSSYGGVVPELASRLHAENLPLLLERIKISLNKDFSKLKAIAITNQPGLSVTLIEGLMMAKALSLSLNLPLILEDHLRGHVYSLFINEKQTCMPLSVLLVSGGHSLILEVRDYEDIKIVATSLDDSFGESFDKVSKMLDLGYPGGPIVEKLALDYAHPNEPLMFPVPLKNSPNLAFSFSGLKNAVRLEVEKNAPNLNEKIKQKIGYHFQSAAIEHLIQQTKRYFKIKRPKIFGIVGGASQNLALRKAFENLCVEFDCKLVLAPLEFCSDNAAMIGRSSLEAYQKKRFVPLEKANISPRTLLKSFE.

His-111 and His-115 together coordinate Fe cation. Residues 134-138 (LVSGG), Asp-167, Gly-180, and Asn-276 each bind substrate. Asp-304 lines the Fe cation pocket.

This sequence belongs to the KAE1 / TsaD family. Requires Fe(2+) as cofactor.

The protein resides in the cytoplasm. It carries out the reaction L-threonylcarbamoyladenylate + adenosine(37) in tRNA = N(6)-L-threonylcarbamoyladenosine(37) in tRNA + AMP + H(+). Its function is as follows. Required for the formation of a threonylcarbamoyl group on adenosine at position 37 (t(6)A37) in tRNAs that read codons beginning with adenine. Is involved in the transfer of the threonylcarbamoyl moiety of threonylcarbamoyl-AMP (TC-AMP) to the N6 group of A37, together with TsaE and TsaB. TsaD likely plays a direct catalytic role in this reaction. The protein is tRNA N6-adenosine threonylcarbamoyltransferase of Helicobacter pylori (strain G27).